A 78-amino-acid polypeptide reads, in one-letter code: Large ribosomal subunit protein bL28 (78 aa).

The protein belongs to the bacterial ribosomal protein bL28 family.

This chain is Large ribosomal subunit protein bL28, found in Pectobacterium atrosepticum (strain SCRI 1043 / ATCC BAA-672) (Erwinia carotovora subsp. atroseptica).